The following is a 116-amino-acid chain: Phosphoribosyl-AMP cyclohydrolase (116 aa).

Aspartate 81 provides a ligand contact to Mg(2+). Cysteine 82 provides a ligand contact to Zn(2+). Mg(2+) contacts are provided by aspartate 83 and aspartate 85. Zn(2+) is bound by residues cysteine 98 and cysteine 105.

This sequence belongs to the PRA-CH family. As to quaternary structure, homodimer. The cofactor is Mg(2+). Zn(2+) is required as a cofactor.

The protein localises to the cytoplasm. The catalysed reaction is 1-(5-phospho-beta-D-ribosyl)-5'-AMP + H2O = 1-(5-phospho-beta-D-ribosyl)-5-[(5-phospho-beta-D-ribosylamino)methylideneamino]imidazole-4-carboxamide. It functions in the pathway amino-acid biosynthesis; L-histidine biosynthesis; L-histidine from 5-phospho-alpha-D-ribose 1-diphosphate: step 3/9. Its function is as follows. Catalyzes the hydrolysis of the adenine ring of phosphoribosyl-AMP. The sequence is that of Phosphoribosyl-AMP cyclohydrolase from Mycolicibacterium vanbaalenii (strain DSM 7251 / JCM 13017 / BCRC 16820 / KCTC 9966 / NRRL B-24157 / PYR-1) (Mycobacterium vanbaalenii).